Here is a 182-residue protein sequence, read N- to C-terminus: Keratin, high-sulfur matrix protein, B2D (182 aa).

A run of 6 repeats spans residues 27–36 (PTCCQTSCCQ), 37–46 (PTSIQTSCCQ), 47–56 (PTSIQTSCCQ), 57–66 (PTSIQTSCCQ), 67–76 (PISIQTSCCQ), and 77–86 (PTCLQTSGCE). Positions 27 to 86 (PTCCQTSCCQPTSIQTSCCQPTSIQTSCCQPTSIQTSCCQPISIQTSCCQPTCLQTSGCE) are 6 X 10 AA tandem repeats.

In terms of biological role, the keratin products of mammalian epidermal derivatives such as wool and hair consist of microfibrils embedded in a rigid matrix of other proteins. The matrix proteins include the high-sulfur and high-tyrosine keratins, having molecular weights of 6-20 kDa, whereas the microfibrils contain the larger, low-sulfur keratins (40-56 kDa). The polypeptide is Keratin, high-sulfur matrix protein, B2D (Ovis aries (Sheep)).